Here is a 227-residue protein sequence, read N- to C-terminus: MENLKKMAGIKAAEFVSDGMVVGLGTGSTAYYFVEEIGRRIKEEGLQITAVTTSSVTSKQAEGLNIPLKSIDQVDFVDVTVDGADEVDSQFNGIKGGGGALLMEKIVATPSKEYIWVVDESKLVDKLGAFKLPVEVVQYGAEQIFRRFERAGYKPSFREKDGQRFVTDMQNFIIDLALDVIEDPIVFGQELDHVVGVVEHGLFNQMVDKVIVAGRDGVQILTSRKEK.

Residues 26–29 (TGST), 82–85 (DGAD), and 95–98 (KGGG) contribute to the substrate site. Residue glutamate 104 is the Proton acceptor of the active site. Lysine 122 serves as a coordination point for substrate.

It belongs to the ribose 5-phosphate isomerase family. As to quaternary structure, homodimer.

It catalyses the reaction aldehydo-D-ribose 5-phosphate = D-ribulose 5-phosphate. Its pathway is carbohydrate degradation; pentose phosphate pathway; D-ribose 5-phosphate from D-ribulose 5-phosphate (non-oxidative stage): step 1/1. In terms of biological role, catalyzes the reversible conversion of ribose-5-phosphate to ribulose 5-phosphate. In Streptococcus pneumoniae (strain Hungary19A-6), this protein is Ribose-5-phosphate isomerase A.